The primary structure comprises 129 residues: Small ribosomal subunit protein bS6 (129 aa).

It belongs to the bacterial ribosomal protein bS6 family.

Its function is as follows. Binds together with bS18 to 16S ribosomal RNA. The polypeptide is Small ribosomal subunit protein bS6 (Microcystis aeruginosa (strain NIES-843 / IAM M-2473)).